A 1009-amino-acid polypeptide reads, in one-letter code: DNA ligase 4 (1009 aa).

2 disordered regions span residues 1–34 (METDQDMHDQAMAGEETDLDEKYPNRPQNKAPTL) and 51–72 (KKKPVGPAGNRRKAGPHGLSAA). The span at 51 to 65 (KKKPVGPAGNRRKAG) shows a compositional bias: basic residues. Residues Glu315, Lys317, Leu318, Arg322, Glu384, Phe424, Glu484, Lys489, Lys506, and Lys508 each contribute to the ATP site. Lys317 functions as the N6-AMP-lysine intermediate in the catalytic mechanism. Residue Glu384 participates in Mg(2+) binding. Glu484 is a Mg(2+) binding site. 2 consecutive BRCT domains span residues 715-808 (PSGH…PDLL) and 887-995 (PCGW…QHMP).

The protein belongs to the ATP-dependent DNA ligase family. It depends on Mg(2+) as a cofactor.

It localises to the nucleus. The enzyme catalyses ATP + (deoxyribonucleotide)n-3'-hydroxyl + 5'-phospho-(deoxyribonucleotide)m = (deoxyribonucleotide)n+m + AMP + diphosphate.. Functionally, DNA ligase involved in DNA non-homologous end joining (NHEJ); required for double-strand break (DSB) repair. This Emericella nidulans (strain FGSC A4 / ATCC 38163 / CBS 112.46 / NRRL 194 / M139) (Aspergillus nidulans) protein is DNA ligase 4 (lig4).